The following is a 244-amino-acid chain: Flavin-dependent thymidylate synthase (244 aa).

Residues 17-239 form the ThyX domain; sequence ITVELVKHSA…PETHAAFEKQ (223 aa). FAD is bound by residues Ser-68, 91–93, and Glu-99; that span reads RHR. DUMP contacts are provided by residues 88-91, 99-103, and Arg-171; these read EFMR and EESGR. The ThyX motif motif lies at 91–101; sequence RHRIASYNEES. Residues 187-189 and Asn-193 contribute to the FAD site; that span reads NAR. Position 198 (Arg-198) interacts with dUMP. The Involved in ionization of N3 of dUMP, leading to its activation role is filled by Arg-198.

Belongs to the thymidylate synthase ThyX family. Homotetramer. FAD is required as a cofactor.

The catalysed reaction is dUMP + (6R)-5,10-methylene-5,6,7,8-tetrahydrofolate + NADPH + H(+) = dTMP + (6S)-5,6,7,8-tetrahydrofolate + NADP(+). Its pathway is pyrimidine metabolism; dTTP biosynthesis. In terms of biological role, catalyzes the reductive methylation of 2'-deoxyuridine-5'-monophosphate (dUMP) to 2'-deoxythymidine-5'-monophosphate (dTMP) while utilizing 5,10-methylenetetrahydrofolate (mTHF) as the methyl donor, and NADPH and FADH(2) as the reductant. This is Flavin-dependent thymidylate synthase from Tropheryma whipplei (strain Twist) (Whipple's bacillus).